We begin with the raw amino-acid sequence, 602 residues long: Multidrug and toxin extrusion protein 2 (602 aa).

The Cytoplasmic segment spans residues 1 to 33 (MDSLQDTVALDHGGCCPALSRLVPRGFGTEMWT). Residues 34-54 (LFALSGPLFLFQVLTFMIYIV) form a helical membrane-spanning segment. Over 55–66 (STVFCGHLGKVE) the chain is Extracellular. A helical transmembrane segment spans residues 67–87 (LASVTLAVAFVNVCGVSVGVG). Over 88–119 (LSSACDTLMSQSFGSPNKKHVGVILQRGALVL) the chain is Cytoplasmic. The chain crosses the membrane as a helical span at residues 120–140 (LLCCLPCWALFLNTQHILLLF). The Extracellular segment spans residues 141–153 (RQDPDVSRLTQDY). A helical membrane pass occupies residues 154-174 (VMIFIPGLPVIFLYNLLAKYL). Over 175-219 (QNQGWLKGQEEESPFQTPGLSILHPSHSHLSRASFHLFQKITWPQ) the chain is Cytoplasmic. A helical membrane pass occupies residues 220–240 (VLSGVVGNCVNGVANYALVSV). The Extracellular segment spans residues 241–248 (LNLGVRGS). Residues 249–269 (AYANIISQFAQTVFLLLYIVL) form a helical membrane-spanning segment. Residues 270–289 (KKLHLETWAGWSSQCLQDWG) are Cytoplasmic-facing. A helical transmembrane segment spans residues 290–309 (PFFSLAVPSMLMICVEWWAY). Topologically, residues 310-327 (EIGSFLMGLLSVVDLSAQ) are extracellular. Residues 328–348 (AVIYEVATVTYMIPLGLSIGV) form a helical membrane-spanning segment. Over 349 to 368 (CVRVGMALGAADTVQAKRSA) the chain is Cytoplasmic. Residues 369–389 (VSGVLSIVGISLVLGTLISIL) traverse the membrane as a helical segment. At 390–402 (KNQLGHIFTNDED) the chain is on the extracellular side. A helical membrane pass occupies residues 403–423 (VIALVSQVLPVYSVFHVFEAI). Residues 424–442 (CCVYGGVLRGTGKQAFGAA) lie on the Cytoplasmic side of the membrane. The chain crosses the membrane as a helical span at residues 443–463 (VNAITYYIIGLPLGILLTFVV). At 464-466 (RMR) the chain is on the extracellular side. A helical transmembrane segment spans residues 467 to 487 (IMGLWLGMLACVFLATAAFVA). The Cytoplasmic portion of the chain corresponds to 488 to 578 (YTARLDWKLA…LSVKQLVIRR (91 aa)). A disordered region spans residues 503–529 (KHSGRQQQQRAESTATRPGPEKAVLSS). A compositionally biased stretch (polar residues) spans 507-518 (RQQQQRAESTAT). Residues 579–599 (GAALGAASATLMVGLTVRILA) form a helical membrane-spanning segment. Residues 600 to 602 (TRH) lie on the Extracellular side of the membrane.

The protein belongs to the multi antimicrobial extrusion (MATE) (TC 2.A.66.1) family. In terms of tissue distribution, high expression in kidney. Very small expression in adrenal gland and lung. As to expression, high expression in kidney. Very small expression in brain and testis. Ubiquitously expressed in all tissues examined except the kidney.

Its subcellular location is the cell membrane. The protein resides in the apical cell membrane. The enzyme catalyses thiamine(out) + H(+)(in) = thiamine(in) + H(+)(out). It catalyses the reaction estrone 3-sulfate(in) + H(+)(out) = estrone 3-sulfate(out) + H(+)(in). The catalysed reaction is creatinine(in) + H(+)(out) = creatinine(out) + H(+)(in). In terms of biological role, multidrug efflux pump that functions as a H(+)/organic cation antiporter. Mediates the efflux of cationic compounds, such as the model cations, tetraethylammonium (TEA) and 1-methyl-4-phenylpyridinium (MPP+), the platinum-based drug oxaliplatin or weak bases that are positively charged at physiological pH, cimetidine, the platinum-based drugs cisplatin and oxaliplatin or the antidiabetic drug metformin. Mediates the efflux of endogenous compounds such as, creatinine, thiamine and estrone-3-sulfate. Plays a physiological role in the excretion of drugs, toxins and endogenous metabolites through the kidney. Non-functional protein. In Homo sapiens (Human), this protein is Multidrug and toxin extrusion protein 2.